The primary structure comprises 774 residues: Multiple C2 domain and transmembrane region protein 11 (774 aa).

Gly residues predominate over residues 1 to 12 (MAVNGTGNGTGD). Residues 1 to 30 (MAVNGTGNGTGDGDFSLKETSPNIGNGGVN) are disordered. C2 domains are found at residues 9–145 (GTGD…PQWY), 184–307 (VTGE…SLWY), and 338–471 (LDES…THSY). Ca(2+)-binding residues include aspartate 62, asparagine 110, aspartate 112, and aspartate 118. A run of 2 helical transmembrane segments spans residues 608 to 628 (LFVV…CFVF) and 722 to 742 (FVSC…FLAF).

It belongs to the MCTP family. The cofactor is Ca(2+). In terms of tissue distribution, observed in flowers.

Its subcellular location is the endoplasmic reticulum membrane. Functionally, may function as a signaling molecule by regulating the trafficking of other regulators. This Arabidopsis thaliana (Mouse-ear cress) protein is Multiple C2 domain and transmembrane region protein 11.